Here is a 555-residue protein sequence, read N- to C-terminus: GMP synthase [glutamine-hydrolyzing] (555 aa).

Residues 8–234 (KILVLNFGSQ…AYNICKCKKQ (227 aa)) form the Glutamine amidotransferase type-1 domain. Catalysis depends on cysteine 89, which acts as the Nucleophile; for GATase activity. Residues glutamine 93, asparagine 169, aspartate 172, and histidine 208 each coordinate L-glutamine. Active-site for GATase activity residues include histidine 208 and glutamate 210. One can recognise a GMPS ATP-PPase domain in the interval 235 to 430 (FDPIRYHELE…LNLPEEITNR (196 aa)). Residue 262 to 268 (SGGIDST) participates in ATP binding. Residues arginine 336, glutamine 476, lysine 547, isoleucine 552, and glutamate 553 each contribute to the XMP site.

In terms of assembly, homodimer (via the GMPS ATP-PPase domain). It depends on Mg(2+) as a cofactor.

It carries out the reaction XMP + L-glutamine + ATP + H2O = GMP + L-glutamate + AMP + diphosphate + 2 H(+). Its pathway is purine metabolism; GMP biosynthesis; GMP from XMP (L-Gln route): step 1/1. With respect to regulation, the GATase domain is allosterically activated by the binding of substrates, ATP and XMP, to the ATPPase domain, thus ensuring that glutamine hydrolysis occurs only when the ATPPase domain is primed to receive ammonia. Inhibited by Na(+). Inhibited by the reaction product GMP. Catalyzes the conversion of xanthine monophosphate (XMP) to GMP in the presence of glutamine and ATP through an adenyl-XMP intermediate, which is the final step of de novo synthesis of GMP. The conversion of XMP to GMP involves the coordinated action of the glutamine amidotransferase (GATase) domain that catalyzes the hydrolysis of the amide side chain of glutamine producing ammonia and the ATP pyrophosphatase (ATPPase) domain that catalyzes the synthesis of adenyl-XMP intermediate from ATP. The ammonia produced by the GATase domain is tunnelled to the ATP-PPase domain where it attacks the adenyl-XMP intermediate generating GMP. This chain is GMP synthase [glutamine-hydrolyzing], found in Plasmodium falciparum (isolate 3D7).